The chain runs to 126 residues: Small ribosomal subunit protein eS6 (126 aa).

It belongs to the eukaryotic ribosomal protein eS6 family.

The protein is Small ribosomal subunit protein eS6 of Thermococcus sibiricus (strain DSM 12597 / MM 739).